Here is a 421-residue protein sequence, read N- to C-terminus: MLCGRLRHTMNSTTCFFSHRTVLIGIVGSLIIAVSVVGNVLVCLAIFTEPILSHSKSKFFIVSLAVADLLLALLVMTFALVNSLYGYWLFGETFCFIWMSADVMCETASIFSICVISYNRLKQVQKPLQYEEFMTTTRALLIIASLWICSFVVSFVPFFLEWHELSMEEIKTIFKDLISDKVKTSDAHTFSFALEQTLGDNRTSNPKPECLFDVHFIYSVIYSLFCFYIPCTLMLRNYLRLFLIAKKHHVRIKNLHRLHRNQGTQGSKAARTLTIITGTFLACWLPFFIINPIEAVDEHLIPLECFMVTIWLGYFNSCVNPIIYGTSNSKFRAAFQRLLRCRSVKSTVSSISPVASVYRAFSWIRPSLLDGPPSAVCDTGQDENRKGGGCVTTIPTESHVIISEEEIRANVMLSESDTVFS.

The Extracellular segment spans residues 1 to 21 (MLCGRLRHTMNSTTCFFSHRT). Asn11 carries an N-linked (GlcNAc...) asparagine glycan. Residues 22-42 (VLIGIVGSLIIAVSVVGNVLV) traverse the membrane as a helical segment. Residues 43-59 (CLAIFTEPILSHSKSKF) lie on the Cytoplasmic side of the membrane. The chain crosses the membrane as a helical span at residues 60–79 (FIVSLAVADLLLALLVMTFA). Topologically, residues 80–95 (LVNSLYGYWLFGETFC) are extracellular. The cysteines at positions 95 and 210 are disulfide-linked. A helical transmembrane segment spans residues 96–118 (FIWMSADVMCETASIFSICVISY). At 119 to 138 (NRLKQVQKPLQYEEFMTTTR) the chain is on the cytoplasmic side. The helical transmembrane segment at 139–160 (ALLIIASLWICSFVVSFVPFFL) threads the bilayer. Residues 161-213 (EWHELSMEEIKTIFKDLISDKVKTSDAHTFSFALEQTLGDNRTSNPKPECLFD) lie on the Extracellular side of the membrane. A helical membrane pass occupies residues 214–234 (VHFIYSVIYSLFCFYIPCTLM). Topologically, residues 235–274 (LRNYLRLFLIAKKHHVRIKNLHRLHRNQGTQGSKAARTLT) are cytoplasmic. Residues 275–295 (IITGTFLACWLPFFIINPIEA) form a helical membrane-spanning segment. Topologically, residues 296–304 (VDEHLIPLE) are extracellular. Residues 305-325 (CFMVTIWLGYFNSCVNPIIYG) traverse the membrane as a helical segment. The Cytoplasmic segment spans residues 326–421 (TSNSKFRAAF…MLSESDTVFS (96 aa)).

Belongs to the G-protein coupled receptor 1 family. In terms of tissue distribution, central nervous system.

The protein localises to the cell membrane. In terms of biological role, this is one of the several different receptors for 5-hydroxytryptamine (serotonin). 5-HT plays important roles in various behavioral and physiological processes in aplysia. These include feeding, locomotion, circadian rhythm, learning and memory, synaptic plasticity, and synaptic growth. This receptor is mediated by G proteins that stimulate phospholipase C. The polypeptide is 5-hydroxytryptamine receptor 2 (5HTB2) (Aplysia californica (California sea hare)).